A 1330-amino-acid chain; its full sequence is G2/mitotic-specific cyclin-B3 (1330 aa).

The disordered stretch occupies residues 1–50 (MPLPLPSRSSKPETKKSRSSKIVPSGNNGQSEKRGENYQEKISSSSPRRL). The span at 20–30 (SKIVPSGNNGQ) shows a compositional bias: polar residues. The short motif at 54–62 (RSAFEDLTN) is the D-box element. The segment at 1002-1059 (VETSSRVPSTPPESRAGMSSVGKLSTTSKSSVCESSSNKPSSSWGESSQKEMTPLEDI) is disordered. The span at 1026–1048 (STTSKSSVCESSSNKPSSSWGES) shows a compositional bias: low complexity.

It belongs to the cyclin family. Cyclin AB subfamily. Interacts with CDK2 kinase. Ubiquitinated. Ubiquitination leads to its degradation during anaphase entry, after degradation of CCNB1.

It localises to the nucleus. Cyclins are positive regulatory subunits of the cyclin-dependent kinases (CDKs), and thereby play an essential role in the control of the cell cycle, notably via their destruction during cell division. Its tissue specificity suggest that it may be required during early meiotic prophase I. The sequence is that of G2/mitotic-specific cyclin-B3 (CCNB3) from Canis lupus familiaris (Dog).